The following is a 971-amino-acid chain: Translation initiation factor IF-2 (971 aa).

Residues 48–63 are compositionally biased toward basic and acidic residues; it reads DHLRKSHGATDGDKRK. Disordered regions lie at residues 48–86 and 100–381; these read DHLR…ARTI and DDVA…STFQ. Over residues 105-114 the composition is skewed to low complexity; the sequence is GADQGQAQVA. Residues 121–181 are compositionally biased toward basic and acidic residues; that stretch reads ELKRREEEAR…EEEAATKRAA (61 aa). The segment covering 182-202 has biased composition (low complexity); the sequence is AEVAAAQQQAAAQQAAAEQEA. The segment covering 210-261 has biased composition (basic and acidic residues); the sequence is DEARAAAERAAQREAAKKAEDAAREAADKARAEQEEISKRRAAAEAEARAIR. Pro residues predominate over residues 277–286; sequence PPKPVEPPKP. Residues 304 to 326 show a composition bias toward low complexity; the sequence is ARPAVKKPAGAAAPATTQAPAGA. Residues 356–369 show a composition bias toward gly residues; it reads SSGGVDRGWRGGPK. One can recognise a tr-type G domain in the interval 471-640; it reads PRPPVVTVMG…LLQAEVLELK (170 aa). Positions 480–487 are G1; it reads GHVDHGKT. 480–487 contributes to the GTP binding site; the sequence is GHVDHGKT. Residues 505 to 509 are G2; the sequence is GITQH. The interval 526-529 is G3; the sequence is DTPG. GTP contacts are provided by residues 526–530 and 580–583; these read DTPGH and NKID. The segment at 580 to 583 is G4; that stretch reads NKID. Positions 616-618 are G5; the sequence is SAK.

The protein belongs to the TRAFAC class translation factor GTPase superfamily. Classic translation factor GTPase family. IF-2 subfamily.

It localises to the cytoplasm. In terms of biological role, one of the essential components for the initiation of protein synthesis. Protects formylmethionyl-tRNA from spontaneous hydrolysis and promotes its binding to the 30S ribosomal subunits. Also involved in the hydrolysis of GTP during the formation of the 70S ribosomal complex. The polypeptide is Translation initiation factor IF-2 (Burkholderia orbicola (strain AU 1054)).